Consider the following 822-residue polypeptide: Sodium/hydrogen exchanger 1 (822 aa).

Residues 1 to 102 are Extracellular-facing; it reads MMLRWSGIWG…FPVLDIDYLH (102 aa). Positions 41–73 are disordered; sequence SPTANTIRGAEPPRERSIGDVTTAPSEPVHHPD. A helical membrane pass occupies residues 103–125; that stretch reads VRTPFEISLWILLACLMKIGFHV. The Cytoplasmic portion of the chain corresponds to 126-134; the sequence is IPTISSIVP. A helical transmembrane segment spans residues 135–152; it reads ESCLLIVVGLLVGGLIKG. Topologically, residues 153–162 are extracellular; sequence VGETPPFLQS. A helical membrane pass occupies residues 163–180; it reads DVFFLFLLPPIILDAGYF. The Cytoplasmic portion of the chain corresponds to 181–190; that stretch reads LPLRQFTENL. The chain crosses the membrane as a helical span at residues 191–219; sequence GTILIFAVVGTLWNAFFLGGLLYAVCLVG. Over 220–226 the chain is Extracellular; it reads GEQINNI. The chain crosses the membrane as a helical span at residues 227–253; sequence GLLDTLLFGSIISAVDPVAVVAVFEEI. Residues 254–256 are Cytoplasmic-facing; sequence HIN. The chain crosses the membrane as a helical span at residues 257-287; it reads ELLHILVFGESLLNDAVTVVLYHLFEEFANY. The Extracellular segment spans residues 288 to 291; that stretch reads DSIG. A helical membrane pass occupies residues 292–326; that stretch reads ISDIFLGFLSFFVVALGGVFVGVVYGVIAAFTSRF. Residues 327–332 are Cytoplasmic-facing; that stretch reads TSHIRV. Residues 333–345 traverse the membrane as a helical segment; that stretch reads IEPLFVFLYSYMA. Over 346-354 the chain is Extracellular; the sequence is YLSAELFHL. The chain crosses the membrane as a helical span at residues 355 to 375; the sequence is SGIMALIASGVVMRPYVEANI. Over 376-377 the chain is Cytoplasmic; that stretch reads SH. The chain crosses the membrane as a helical span at residues 378 to 408; it reads KSHTTIKYFLKMWSSVSETLIFIFLGVSTVA. Residues 409-414 lie on the Extracellular side of the membrane; it reads GSHQWN. A helical transmembrane segment spans residues 415–442; it reads WTFVISTLLFCLIARVLGVLVLTWFINK. At 443–448 the chain is on the cytoplasmic side; it reads FRIVKL. A helical transmembrane segment spans residues 449–473; it reads TPKDQFIIAYGGLRGAIAFSLGYLM. Topologically, residues 474 to 479 are extracellular; it reads DKKHFP. The chain crosses the membrane as a helical span at residues 480 to 509; it reads MCDLFLTAIITVIFFTVFVQGMTIRPLVDL. Residues 507-549 form an interaction with TESC region; the sequence is VDLLAVKKKQETKRSINEEIHTQFLDHLLTGIEDICGHYGHHH. Over 510 to 822 the chain is Cytoplasmic; it reads LAVKKKQETK…EGEPFIPKGE (313 aa). Residues 513-520 are PI(4,5)P2-binding region; it reads KKKQETKR. Positions 519-549 are interaction with CHP2; it reads KRSINEEIHTQFLDHLLTGIEDICGHYGHHH. Positions 544–549 are confers pH-dependent PI(4,5)P2 binding; sequence HYGHHH. The segment at 556–564 is PI(4,5)P2-binding region; it reads RFNKKYVKK. Residues S603 and S606 each carry the phosphoserine modification. Residue T607 is modified to Phosphothreonine. 2 positions are modified to phosphoserine: S609 and S652. The segment at 637–822 is interaction with TESC; the sequence is KILRSNLQKT…EGEPFIPKGE (186 aa). Positions 637-822 are interaction with CALM1; sequence KILRSNLQKT…EGEPFIPKGE (186 aa). Positions 688-691 are interaction with PPP3CA; the sequence is LTVP. 3 positions are modified to phosphoserine: S697, S701, and S707. Residues 719–724 form an interaction with PPP3CA region; sequence PVITID. Phosphoserine is present on residues S727, S730, and S733. The interval 752 to 822 is disordered; sequence PTRLTRGEED…EGEPFIPKGE (71 aa). T756 is modified (phosphothreonine). The segment covering 759–768 has biased composition (acidic residues); the sequence is EEDEDEDEDG. A Phosphothreonine modification is found at T786. Phosphoserine is present on residues S792, S794, and S803.

It belongs to the monovalent cation:proton antiporter 1 (CPA1) transporter (TC 2.A.36) family. Homodimer; dimerization is crucial for its function. Oligomer. Interacts with CALM in a calcium-dependent manner. Interacts with TESC. Interacts (via the juxtamembrane region of the cytoplasmic C-terminal domain) with CHP1; the interaction occurs at the plasma membrane in a calcium-dependent manner. Interacts with CHP2; the interaction occurs in a calcium-dependent manner. Interacts with EZR; regulates the cytoskeletal interactions of SLC9A1 and promotes stress fiber formation. Ubiquitinated, leading to its degradation by the proteasome. Ubiquitination is reduced by CHP1. In terms of processing, O-glycosylated. Post-translationally, palmitoylated; may play a major role in SLC9A1 regulation. Phosphorylation at Thr-786 increases SLC9A1 activity. Specifically dephosphorylated at Thr-786 by PPP3CA that negatively regulates SLC9A1 activity. Phosphorylation at Ser-652 by AKT1 reduces SLC9A1 binding to CALM1.

Its subcellular location is the cell membrane. The protein resides in the basolateral cell membrane. It carries out the reaction Na(+)(in) + H(+)(out) = Na(+)(out) + H(+)(in). The enzyme catalyses Li(+)(out) + H(+)(in) = Li(+)(in) + H(+)(out). It catalyses the reaction Li(+)(in) + Na(+)(out) = Li(+)(out) + Na(+)(in). Its activity is regulated as follows. Activated at acidic pHs. Inhibited by amiloride and 5-amino-substituted derivatives. Inhibited by cariporide and eniporide. Phosphatidylinositol 4,5-bisphosphate (PI(4,5)P2) and phosphatidylinositol 3,4,5-trisphosphate (PI(3,4,5)P3) bind and differentially regulate SLC9A1 activity. Its function is as follows. Electroneutral Na(+) /H(+) antiporter that extrudes Na(+) in exchange for external protons driven by the inward sodium ion chemical gradient, protecting cells from acidification that occurs from metabolism. Exchanges intracellular H(+) ions for extracellular Na(+) in 1:1 stoichiometry. Plays a key role in maintening intracellular pH neutral and cell volume, and thus is important for cell growth, proliferation, migration and survival. In addition, can transport lithium Li(+) and also functions as a Na(+)/Li(+) antiporter. SLC9A1 also functions in membrane anchoring and organization of scaffolding complexes that coordinate signaling inputs. The chain is Sodium/hydrogen exchanger 1 (SLC9A1) from Cricetulus griseus (Chinese hamster).